The primary structure comprises 379 residues: Cytochrome b (379 aa).

4 consecutive transmembrane segments (helical) span residues 33–53 (FGSL…FLAM), 77–98 (WLIR…FIHV), 113–133 (WNIG…GYVL), and 178–198 (FFAF…VHLL). Residues H83 and H97 each contribute to the heme b site. The heme b site is built by H182 and H196. H201 serves as a coordination point for a ubiquinone. The next 4 helical transmembrane spans lie at 226–246 (IKDL…ALFF), 288–308 (LGGV…PLLN), 320–340 (ITQT…WIGG), and 347–367 (FTTI…ILMP).

The protein belongs to the cytochrome b family. The cytochrome bc1 complex contains 11 subunits: 3 respiratory subunits (MT-CYB, CYC1 and UQCRFS1), 2 core proteins (UQCRC1 and UQCRC2) and 6 low-molecular weight proteins (UQCRH/QCR6, UQCRB/QCR7, UQCRQ/QCR8, UQCR10/QCR9, UQCR11/QCR10 and a cleavage product of UQCRFS1). This cytochrome bc1 complex then forms a dimer. It depends on heme b as a cofactor.

It is found in the mitochondrion inner membrane. Component of the ubiquinol-cytochrome c reductase complex (complex III or cytochrome b-c1 complex) that is part of the mitochondrial respiratory chain. The b-c1 complex mediates electron transfer from ubiquinol to cytochrome c. Contributes to the generation of a proton gradient across the mitochondrial membrane that is then used for ATP synthesis. In Akodon affinis (Colombian grass mouse), this protein is Cytochrome b (MT-CYB).